A 94-amino-acid polypeptide reads, in one-letter code: Acylphosphatase (94 aa).

In terms of domain architecture, Acylphosphatase-like spans 7 to 94; that stretch reads AALVRITGRV…EAPAGFRITR (88 aa). Active-site residues include Arg22 and Asn40.

The protein belongs to the acylphosphatase family.

The catalysed reaction is an acyl phosphate + H2O = a carboxylate + phosphate + H(+). This chain is Acylphosphatase (acyP), found in Sinorhizobium medicae (strain WSM419) (Ensifer medicae).